A 106-amino-acid chain; its full sequence is Nucleoid-associated protein Smlt1015 (106 aa).

The disordered stretch occupies residues 81 to 106; it reads IDAESKSKMGSATAGMQLPPGMKLPF.

The protein belongs to the YbaB/EbfC family. In terms of assembly, homodimer.

Its subcellular location is the cytoplasm. The protein resides in the nucleoid. In terms of biological role, binds to DNA and alters its conformation. May be involved in regulation of gene expression, nucleoid organization and DNA protection. This Stenotrophomonas maltophilia (strain K279a) protein is Nucleoid-associated protein Smlt1015.